Consider the following 286-residue polypeptide: Pantothenate synthetase (286 aa).

31-38 (MGALHDGH) contributes to the ATP binding site. The active-site Proton donor is the His38. Gln62 contributes to the (R)-pantoate binding site. Gln62 contacts beta-alanine. 148 to 151 (GKKD) contributes to the ATP binding site. Gln154 provides a ligand contact to (R)-pantoate. Residues Val177 and 185–188 (KSSR) contribute to the ATP site.

Belongs to the pantothenate synthetase family. As to quaternary structure, homodimer.

The protein localises to the cytoplasm. It carries out the reaction (R)-pantoate + beta-alanine + ATP = (R)-pantothenate + AMP + diphosphate + H(+). It participates in cofactor biosynthesis; (R)-pantothenate biosynthesis; (R)-pantothenate from (R)-pantoate and beta-alanine: step 1/1. Functionally, catalyzes the condensation of pantoate with beta-alanine in an ATP-dependent reaction via a pantoyl-adenylate intermediate. This is Pantothenate synthetase from Staphylococcus carnosus (strain TM300).